The sequence spans 134 residues: Small ribosomal subunit protein uS8c (134 aa).

Belongs to the universal ribosomal protein uS8 family. Part of the 30S ribosomal subunit.

It is found in the plastid. The protein localises to the chloroplast. Its function is as follows. One of the primary rRNA binding proteins, it binds directly to 16S rRNA central domain where it helps coordinate assembly of the platform of the 30S subunit. In Gossypium hirsutum (Upland cotton), this protein is Small ribosomal subunit protein uS8c (rps8).